Consider the following 595-residue polypeptide: Indole-3-acetic acid-amido synthetase GH3.15 (595 aa).

Residues 97–98, threonine 302, and 325–330 contribute to the ATP site; these read SS and FYGSSE. The substrate site is built by phenylalanine 325 and phenylalanine 332. ATP contacts are provided by tyrosine 348 and aspartate 408.

It belongs to the IAA-amido conjugating enzyme family. Expressed in seedlings, roots, and parts of the siliques.

The catalysed reaction is (indol-3-yl)butanoate + L-cysteine + ATP = (indol-3-yl)butanoyl-L-cysteine + AMP + diphosphate + H(+). It carries out the reaction (indol-3-yl)butanoate + L-glutamine + ATP = (indol-3-yl)butanoyl-L-glutamine + AMP + diphosphate + H(+). It catalyses the reaction 4-(2,4-dichlorophenoxy)butanoate + L-glutamine + ATP = 4-(2,4-dichlorophenoxy)butanoyl-L-glutamine + AMP + diphosphate + H(+). In terms of biological role, indole-3-acetic acid-amido (IAA) synthetase that catalyzes the conjugation of amino acids to auxin specifically using the auxin precursor indole-3-butyric acid (IBA) and glutamine and, possibly, cysteine as substrates. Displays high catalytic activity with the auxinic phenoxyalkanoic acid herbicides 4-(2,4-dichlorophenoxy)butyric acid (2,4-DB) and to some extent 2,4-dichlorophenoxylacetic acid (2,4-D) as substrates, thus conferring resistance to herbicides. The polypeptide is Indole-3-acetic acid-amido synthetase GH3.15 (Arabidopsis thaliana (Mouse-ear cress)).